The chain runs to 261 residues: Arcelin-5A (261 aa).

Residues 1-21 (MASSKLLSLALFLVLLTHANS) form the signal peptide. Residues Asn43, Asn91, and Asn100 are each glycosylated (N-linked (GlcNAc...) asparagine). Cys167 and Cys203 form a disulfide bridge. The propeptide occupies 255–261 (ILLNNIL).

The protein belongs to the leguminous lectin family. As to quaternary structure, monomer. The C-terminal segment appears to be highly susceptible to proteolysis.

Seed storage. This carbohydrate-binding lectin has toxic effects on bean bruchid pests. This is Arcelin-5A (ARC5A) from Phaseolus vulgaris (Kidney bean).